The primary structure comprises 48 residues: uncharacterized protein (48 aa).

This is an uncharacterized protein from Methanocaldococcus jannaschii (strain ATCC 43067 / DSM 2661 / JAL-1 / JCM 10045 / NBRC 100440) (Methanococcus jannaschii).